A 141-amino-acid chain; its full sequence is Large ribosomal subunit protein uL16 (141 aa).

The segment at 1 to 23 (MLMPKRTKYRKQMKGRNRGKAHR) is disordered.

This sequence belongs to the universal ribosomal protein uL16 family. In terms of assembly, part of the 50S ribosomal subunit.

Its function is as follows. Binds 23S rRNA and is also seen to make contacts with the A and possibly P site tRNAs. This chain is Large ribosomal subunit protein uL16, found in Helicobacter acinonychis (strain Sheeba).